Here is a 115-residue protein sequence, read N- to C-terminus: Small ribosomal subunit protein bS6 (115 aa).

This sequence belongs to the bacterial ribosomal protein bS6 family.

In terms of biological role, binds together with bS18 to 16S ribosomal RNA. In Picosynechococcus sp. (strain ATCC 27264 / PCC 7002 / PR-6) (Agmenellum quadruplicatum), this protein is Small ribosomal subunit protein bS6.